A 1711-amino-acid polypeptide reads, in one-letter code: Protein chiffon (1711 aa).

Disordered stretches follow at residues 1 to 31, 87 to 129, and 244 to 307; these read MQPQSDKQSASRLATTTSHSTAAASATAATP, KPEV…SRAD, and TKSK…IDSS. Residues 1–400 form a sufficient for interaction with and activation of Cdc7 region; it reads MQPQSDKQSA…PALREKSKRI (400 aa). Low complexity-rich tracts occupy residues 10-30 and 97-109; these read ASRLATTTSHSTAAASATAAT and TPGTPSTPGTPTS. 2 positions are modified to phosphoserine: serine 306 and serine 307. Residues 307–356 form a DBF4-type zinc finger; sequence SEKQGGVCEICKLEYDILNIHLQSKDHELFAKNSDNFLALDTLIQSSADV. The Zn(2+) site is built by cysteine 314, cysteine 317, histidine 327, and histidine 333. Over residues 365–378 the composition is skewed to acidic residues; it reads VESELDMDVDESLS. 11 disordered regions span residues 365 to 507, 531 to 647, 733 to 771, 791 to 817, 908 to 945, 1005 to 1025, 1055 to 1157, 1271 to 1290, 1303 to 1329, 1343 to 1370, and 1383 to 1644; these read VESE…DSPS, MFPR…KPQL, LDEEVDSSCSSGSDEDYIAGSQRRITAAPRKSTDTREQR, TEVKTSPSKSRTKIQKPSSPTKNKVKQ, QDKGEQIKLEDQKPAPKKEVKKEEEVQSSSSSATYKNK, RSTSSSSCSNSQRSGITCRNK, QRQD…RNQS, ESEGREERLVNTPQTPPPTD, MGSAGSGDDDEDVSRGNPPGSGRRMSN, LKSNRTGWPKAQRRRNAGGLGGSRALPD, and LHPI…SKYA. A phosphoserine mark is found at serine 406, serine 407, serine 417, serine 432, and serine 435. The segment covering 429-439 has biased composition (polar residues); sequence QGNSPGSLSEL. The span at 445–454 shows a compositional bias: low complexity; sequence PTTAAATPTT. Serine 467 is modified (phosphoserine). The a.T hook DNA-binding region spans 493 to 505; that stretch reads PRGRGRPPNQVDS. Residues 537–546 show a composition bias toward polar residues; the sequence is VPTTRSSSEL. Serine 542, serine 543, and serine 544 each carry phosphoserine. Positions 549–560 are enriched in basic and acidic residues; sequence DVDRQTTSDVRG. Positions 563-575 are enriched in low complexity; it reads SISSASLDTSTSE. Positions 588-601 are enriched in basic residues; the sequence is IRKRAQAVGRRRKV. The span at 793–812 shows a compositional bias: polar residues; that stretch reads VKTSPSKSRTKIQKPSSPTK. Positions 908 to 932 are enriched in basic and acidic residues; that stretch reads QDKGEQIKLEDQKPAPKKEVKKEEE. Low complexity predominate over residues 1006-1018; sequence STSSSSCSNSQRS. Residue threonine 1081 is modified to Phosphothreonine. 2 positions are modified to phosphoserine: serine 1091 and serine 1092. Polar residues predominate over residues 1092-1101; it reads SPRTTRSQAA. Residues 1398 to 1407 show a composition bias toward low complexity; sequence TTTTTTTTTT. Residues 1400–1695 form a sufficient for interaction with Gcn5 region; sequence TTTTTTTTSA…NAWRRTQRRA (296 aa). The segment covering 1435-1445 has biased composition (basic and acidic residues); sequence ADDKQNSREDA. 2 stretches are compositionally biased toward acidic residues: residues 1453-1475 and 1483-1518; these read DVDEQAEPQADEMESLPDEDETM and QDVEAEIEATDADVEEEEEEEDEDEDVFEDAYEEQD. Composition is skewed to polar residues over residues 1536–1545 and 1556–1591; these read ISVTTPPEDS and HNGQRLQATSTPSTGQVQQHQRRTPQLNGSLGSCIS.

In terms of assembly, component of the Dbf4-dependent kinase (DDK) complex consisting of Cdc7 and the Dbf4 ortholog chif. Interacts with Cdc7; the interaction is direct. Interacts with CG5790. As to quaternary structure, component of the Chiffon histone acetyltransferase (CHAT) complex consisting of Ada3, Sgf29, Gcn5, chif/chiffon and Ada2b (Isoform A). Interacts (via C-terminus) with Gcn5; the interaction is direct but weak in the absence of other CHAT components. In terms of processing, may be proteolytically cleaved to produce a N-terminal 50 kDa product.

Its subcellular location is the nucleus. A bicistronic gene producing two proteins that are components of different complexes and have separate properties and functions. Full-length protein is proteolytically cleaved, producing a ~50kDa N-terminal product (Chiffon-A) that forms part of the DDK complex; it is unclear if the C-terminal proteolytic product is stable or functional. Alternative initiation from an internal ribosome entry site produces a C-terminal ~48kDa product (Chiffon-B or Isoform E) that forms part of the CHAT complex. Involved in regulation of gene expression during embryonic development. Functionally, regulatory component of the Dbf4-dependent kinase (DDK) complex. Required for the amplification stage, but not the preceding endoreplication stage of DNA replication in egg chamber follicle cells of the ovary. May be involved in initiation of DNA replication; activation of the chorion gene origins. May have a role in eye and thoracic bristle development. Required for female fertility; is not required for oogenesis but is required maternally for early embryo development. Its function is as follows. Component of the CHAT histone acetyltransferase complex, which predominantly acetylates histone H3. As part of the CHAT complex involved in acetylation of histone H3 on 'Lys-10' (H3K9ac), 'Lys-15' (H3K14ac) and 'Lys-19' (H3K18ac), but not 'Lys-25' (H3K24ac). May also regulate other histone acetyltransferase complexes. Essential for viability. Not required for early stages of embryonic development. May be involved in zygotic genome activation during embryogenesis. The sequence is that of Protein chiffon from Drosophila melanogaster (Fruit fly).